We begin with the raw amino-acid sequence, 346 residues long: Biotin synthase (346 aa).

Positions Gln38–Thr256 constitute a Radical SAM core domain. The [4Fe-4S] cluster site is built by Cys53, Cys57, and Cys60. The [2Fe-2S] cluster site is built by Cys97, Cys128, Cys188, and Arg260.

This sequence belongs to the radical SAM superfamily. Biotin synthase family. In terms of assembly, homodimer. The cofactor is [4Fe-4S] cluster. Requires [2Fe-2S] cluster as cofactor.

It catalyses the reaction (4R,5S)-dethiobiotin + (sulfur carrier)-SH + 2 reduced [2Fe-2S]-[ferredoxin] + 2 S-adenosyl-L-methionine = (sulfur carrier)-H + biotin + 2 5'-deoxyadenosine + 2 L-methionine + 2 oxidized [2Fe-2S]-[ferredoxin]. It participates in cofactor biosynthesis; biotin biosynthesis; biotin from 7,8-diaminononanoate: step 2/2. Its function is as follows. Catalyzes the conversion of dethiobiotin (DTB) to biotin by the insertion of a sulfur atom into dethiobiotin via a radical-based mechanism. The sequence is that of Biotin synthase from Citrobacter koseri (strain ATCC BAA-895 / CDC 4225-83 / SGSC4696).